The chain runs to 458 residues: Serine/threonine-protein kinase tricornered (458 aa).

Residues 92-389 enclose the Protein kinase domain; the sequence is FEALKVIGRG…LEDLKSVPFF (298 aa). ATP-binding positions include 98–106 and K121; that span reads IGRGAFGEV. The tract at residues 118-179 is interaction with mats and Mob1; the sequence is YAMKVLRKAD…EFLPGGDMMT (62 aa). Residue D215 is the Proton acceptor of the active site. S287 is subject to Phosphoserine. The 69-residue stretch at 390–458 folds into the AGC-kinase C-terminal domain; it reads RGVDWEHIRE…YKRFEVRNLE (69 aa). T448 is subject to Phosphothreonine.

The protein belongs to the protein kinase superfamily. AGC Ser/Thr protein kinase family. Interacts with, and is activated by, Mob1. The cofactor is Mg(2+).

The protein localises to the cytoplasm. It is found in the nucleus. It carries out the reaction L-seryl-[protein] + ATP = O-phospho-L-seryl-[protein] + ADP + H(+). It catalyses the reaction L-threonyl-[protein] + ATP = O-phospho-L-threonyl-[protein] + ADP + H(+). Functionally, serine/threonine-protein kinase involved in controlling cell structure and proliferation of a variety of polarized outgrowths including epidermal hairs, bristles, arista laterals, and dendrites. Together with fry, maintains the integrity of epidermal hairs and is an essential component of the signaling pathway regulating dendritic branching of sensory neurons. Reduces neurite outgrowth by phosphorylating pav/pavarotti, thereby inhibiting its function in microtubule-microtubule sliding. The chain is Serine/threonine-protein kinase tricornered from Drosophila pseudoobscura pseudoobscura (Fruit fly).